We begin with the raw amino-acid sequence, 179 residues long: Translation initiation factor IF-3 (179 aa).

The protein belongs to the IF-3 family. Monomer.

The protein resides in the cytoplasm. In terms of biological role, IF-3 binds to the 30S ribosomal subunit and shifts the equilibrium between 70S ribosomes and their 50S and 30S subunits in favor of the free subunits, thus enhancing the availability of 30S subunits on which protein synthesis initiation begins. The chain is Translation initiation factor IF-3 from Treponema pallidum (strain Nichols).